Consider the following 192-residue polypeptide: 3-hydroxyanthranilate 3,4-dioxygenase 1 (192 aa).

Arginine 50 serves as a coordination point for O2. Fe cation-binding residues include histidine 54, glutamate 60, and histidine 102. Position 60 (glutamate 60) interacts with substrate. Residues arginine 106 and glutamate 116 each contribute to the substrate site. 4 residues coordinate a divalent metal cation: cysteine 131, cysteine 134, cysteine 168, and cysteine 171.

Belongs to the 3-HAO family. Requires Fe(2+) as cofactor.

The protein localises to the cytoplasm. It catalyses the reaction 3-hydroxyanthranilate + O2 = (2Z,4Z)-2-amino-3-carboxymuconate 6-semialdehyde. It participates in cofactor biosynthesis; NAD(+) biosynthesis; quinolinate from L-kynurenine: step 3/3. Functionally, catalyzes the oxidative ring opening of 3-hydroxyanthranilate to 2-amino-3-carboxymuconate semialdehyde, which spontaneously cyclizes to quinolinate. The polypeptide is 3-hydroxyanthranilate 3,4-dioxygenase 1 (bna1-1) (Aspergillus clavatus (strain ATCC 1007 / CBS 513.65 / DSM 816 / NCTC 3887 / NRRL 1 / QM 1276 / 107)).